We begin with the raw amino-acid sequence, 438 residues long: Adenylosuccinate synthetase (438 aa).

GTP-binding positions include 13–19 and 41–43; these read GDEGKGK and GHT. D14 functions as the Proton acceptor in the catalytic mechanism. Residues D14 and G41 each coordinate Mg(2+). IMP-binding positions include 14–17, 39–42, T136, R150, Q231, T246, and R310; these read DEGK and NAGH. Catalysis depends on H42, which acts as the Proton donor. 306-312 contributes to the substrate binding site; that stretch reads STTGRRR. Residues R312, 338–340, and 421–423 each bind GTP; these read KID and STG.

The protein belongs to the adenylosuccinate synthetase family. In terms of assembly, homodimer. Mg(2+) is required as a cofactor.

Its subcellular location is the cytoplasm. The enzyme catalyses IMP + L-aspartate + GTP = N(6)-(1,2-dicarboxyethyl)-AMP + GDP + phosphate + 2 H(+). The protein operates within purine metabolism; AMP biosynthesis via de novo pathway; AMP from IMP: step 1/2. Plays an important role in the de novo pathway of purine nucleotide biosynthesis. Catalyzes the first committed step in the biosynthesis of AMP from IMP. The sequence is that of Adenylosuccinate synthetase from Blochmanniella floridana.